Reading from the N-terminus, the 151-residue chain is Regulatory protein RecX (151 aa).

It belongs to the RecX family.

It is found in the cytoplasm. Modulates RecA activity. The protein is Regulatory protein RecX of Actinobacillus pleuropneumoniae serotype 5b (strain L20).